The primary structure comprises 60 residues: Single-pass membrane and coiled-coil domain-containing protein 4 homolog (60 aa).

Residues 1–22 (MRKLRGGQTRETRKQKQERREE) form a disordered region. Positions 8 to 22 (QTRETRKQKQERREE) are enriched in basic and acidic residues. Residues 8-34 (QTRETRKQKQERREENQKIQQQLKTIV) adopt a coiled-coil conformation. Residues 30–50 (LKTIVLPICGVVFLCIVAYVF) traverse the membrane as a helical segment.

The protein belongs to the SMCO4 family.

It is found in the membrane. The polypeptide is Single-pass membrane and coiled-coil domain-containing protein 4 homolog (Culex quinquefasciatus (Southern house mosquito)).